A 315-amino-acid chain; its full sequence is Acetaldehyde dehydrogenase 2 (315 aa).

An NAD(+)-binding site is contributed by 11-14 (SGNI). The active-site Acyl-thioester intermediate is Cys129. NAD(+) is bound by residues 160–168 (SAGPGTRSN) and Asn290.

Belongs to the acetaldehyde dehydrogenase family.

It carries out the reaction acetaldehyde + NAD(+) + CoA = acetyl-CoA + NADH + H(+). This chain is Acetaldehyde dehydrogenase 2, found in Mycobacterium sp. (strain KMS).